The chain runs to 201 residues: Small ribosomal subunit protein uS4c (201 aa).

The S4 RNA-binding domain occupies 89–150; sequence MRLDNILFRL…KQRSKVLIQN (62 aa).

This sequence belongs to the universal ribosomal protein uS4 family. Part of the 30S ribosomal subunit. Contacts protein S5. The interaction surface between S4 and S5 is involved in control of translational fidelity.

Its subcellular location is the plastid. The protein resides in the chloroplast. Its function is as follows. One of the primary rRNA binding proteins, it binds directly to 16S rRNA where it nucleates assembly of the body of the 30S subunit. With S5 and S12 plays an important role in translational accuracy. This Acorus calamus (Sweet flag) protein is Small ribosomal subunit protein uS4c (rps4).